Consider the following 577-residue polypeptide: MLSCDICGETVTSEPDRKAHLIVHMENEIICPFCKLSGINYNEMCFHIETAHFEQTTPEKSFETLAAVQYENSDLGNTKLHSTVEVTSGIHSACASNFPKESSESLSKDRTLKQEAFYTESVAESRKYQKSREKQSGLSEAQGSIYETTYSPPECPFCGRIERYSQDMEIHVKTKHASLLESPLEDCHQPLYDCPMCGLVCTNYHILQEHVDLHLEESSFQQGMDRVQCSSDRELAHQLQQEEERKRKSEESRQEREEFQKLQRQYGLDNSGGYKQQQLRHMELEVTRGRMHPSEFHSRKADMLESIAVGIDDGKTKTSGIIEALHRYYQNIATDVRCVWLSTVVDHFHSSFGDKGWGCGYRNFQMLLSSLLQNEVYSDCLKGMSVPCIPKIQSMIEDAWNEGFDPQGASQLNNKLQGTKAWIGACEIYTLLTSLKVKCRIIDFHKSTGPSGTHPRLFEWILNYYSSETEGAPKVVCTSKPPVYLQHQGHSRTVVGIEERKNRTLCLLIFDPGCPSREMQKLLKQDMEAGSLRQLRKCVGNLKHKQYQIVAVEGILSPEERAARKQASQVFTAEKIP.

The segment at 2-24 (LSCDICGETVTSEPDRKAHLIVH) adopts a C2H2-type 1 zinc-finger fold. The C2H2-type 2; atypical zinc-finger motif lies at 29–52 (IICPFCKLSGINYNEMCFHIETAH). 2 consecutive C2H2-type zinc fingers follow at residues 153 to 176 (PECP…KTKH) and 192 to 214 (YDCP…VDLH). Residues 225-247 (DRVQCSSDRELAHQLQQEEERKR) are MIU. A compositionally biased stretch (basic and acidic residues) spans 231 to 261 (SDRELAHQLQQEEERKRKSEESRQEREEFQK). The disordered stretch occupies residues 231–262 (SDRELAHQLQQEEERKRKSEESRQEREEFQKL). Residues 248–273 (KSEESRQEREEFQKLQRQYGLDNSGG) form a zUBD/ZHA region. K261 carries the N6-acetyllysine modification. The active-site Nucleophile is the C359. Catalysis depends on H490, which acts as the Proton acceptor. D511 is an active-site residue.

The protein belongs to the peptidase C78 family. ZUFSP subfamily. In terms of assembly, interacts with RPA1 and RPA2.

The protein resides in the cytoplasm. Its subcellular location is the nucleus. The catalysed reaction is Thiol-dependent hydrolysis of ester, thioester, amide, peptide and isopeptide bonds formed by the C-terminal Gly of ubiquitin (a 76-residue protein attached to proteins as an intracellular targeting signal).. Its function is as follows. Deubiquitinase with endodeubiquitinase activity that specifically interacts with and cleaves 'Lys-63'-linked long polyubiquitin chains. Shows only weak activity against 'Lys-11' and 'Lys-48'-linked chains. Plays an important role in genome stability pathways, functioning to prevent spontaneous DNA damage and also promote cellular survival in response to exogenous DNA damage. Modulates the ubiquitination status of replication protein A (RPA) complex proteins in response to replication stress. In Rattus norvegicus (Rat), this protein is Zinc finger-containing ubiquitin peptidase 1.